A 316-amino-acid chain; its full sequence is MPLTTPTAIFLMGPTASGKTDLAIQLRQTLPVEVISVDSALIYRGMDIGTAKPSAEELALAPHRLIDICDPAESYSAANFRQDALREMADIIAAGKIPLLVGGTMLYYKALLEGLSPLPSADEKVRSEIEEKAQLQGWAALHQELAKIDPLAAQRINPNDSQRINRALEVFYLTGKSLSELSQQKGDSLPYQILQFAIAPKDRSILHDRIALRFQKMIEQGFQQEVEKLYQREDLHLDLPAMRCVGYRQMWEYLRGDYDHDEMIFRGICATRQLAKRQITWLRGWKYPIEWLDSLAIESAKQTIIHAVTKISHSNS.

13–20 (GPTASGKT) lines the ATP pocket. 15–20 (TASGKT) provides a ligand contact to substrate. Interaction with substrate tRNA stretches follow at residues 38–41 (DSAL), 162–166 (QRINR), 243–248 (RCVGYR), and 276–283 (KRQITWLR).

The protein belongs to the IPP transferase family. In terms of assembly, monomer. Mg(2+) is required as a cofactor.

The catalysed reaction is adenosine(37) in tRNA + dimethylallyl diphosphate = N(6)-dimethylallyladenosine(37) in tRNA + diphosphate. In terms of biological role, catalyzes the transfer of a dimethylallyl group onto the adenine at position 37 in tRNAs that read codons beginning with uridine, leading to the formation of N6-(dimethylallyl)adenosine (i(6)A). This Pasteurella multocida (strain Pm70) protein is tRNA dimethylallyltransferase.